The sequence spans 101 residues: DNA-binding protein Fis (101 aa).

Residues 77 to 96 (QTRAANMLGINRGTLRKKLK) constitute a DNA-binding region (H-T-H motif).

This sequence belongs to the transcriptional regulatory Fis family. As to quaternary structure, homodimer.

In terms of biological role, activates ribosomal RNA transcription. Plays a direct role in upstream activation of rRNA promoters. The chain is DNA-binding protein Fis from Shewanella halifaxensis (strain HAW-EB4).